The sequence spans 79 residues: uncharacterized protein (79 aa).

Positions 1–33 are cleaved as a signal peptide; it reads MRLSIRAIVLFALVWIGLLMSGYGVLVGSKVNA.

This is an uncharacterized protein from Salmonella paratyphi A (strain ATCC 9150 / SARB42).